The sequence spans 280 residues: Succinate dehydrogenase [ubiquinone] iron-sulfur subunit, mitochondrial (280 aa).

A mitochondrion-targeting transit peptide spans 1–28 (MAAVVAVSLKRWFPATTLGGACLQACRG). The region spanning 40–131 (KKFAIYRWDP…DKVSKIYPLP (92 aa)) is the 2Fe-2S ferredoxin-type domain. N6-acetyllysine is present on residues Lys51 and Lys55. The [2Fe-2S] cluster site is built by Cys93, Cys98, Cys101, and Cys113. The interval 146 to 218 (FYAQYKSIEP…PAVLMQAYRW (73 aa)) is interaction with SDHAF1. The 4Fe-4S ferredoxin-type domain maps to 176–206 (EREKLDGLYECILCACCSTSCPSYWWNGDKY). Residues Cys186, Cys189, and Cys192 each contribute to the [4Fe-4S] cluster site. Cys196 provides a ligand contact to [3Fe-4S] cluster. Position 201 (Trp201) interacts with a ubiquinone. The [3Fe-4S] cluster site is built by Cys243 and Cys249. Position 253 (Cys253) interacts with [4Fe-4S] cluster.

Belongs to the succinate dehydrogenase/fumarate reductase iron-sulfur protein family. In terms of assembly, component of complex II composed of four subunits: the flavoprotein (FP) SDHA, iron-sulfur protein (IP) SDHB, and a cytochrome b560 composed of SDHC and SDHD. Interacts with SDHAF1; the interaction is required for iron-sulfur cluster incorporation into SDHB. [2Fe-2S] cluster is required as a cofactor. [3Fe-4S] cluster serves as cofactor. The cofactor is [4Fe-4S] cluster.

The protein resides in the mitochondrion inner membrane. The catalysed reaction is a quinone + succinate = fumarate + a quinol. It catalyses the reaction (R)-malate + a quinone = enol-oxaloacetate + a quinol. The enzyme catalyses (S)-malate + a quinone = enol-oxaloacetate + a quinol. The protein operates within carbohydrate metabolism; tricarboxylic acid cycle; fumarate from succinate (eukaryal route): step 1/1. Its activity is regulated as follows. Enol-oxaloacetate inhibits the succinate dehydrogenase activity. Iron-sulfur protein (IP) subunit of the succinate dehydrogenase complex (mitochondrial respiratory chain complex II), responsible for transferring electrons from succinate to ubiquinone (coenzyme Q). SDH also oxidizes malate to the non-canonical enol form of oxaloacetate, enol-oxaloacetate. Enol-oxaloacetate, which is a potent inhibitor of the succinate dehydrogenase activity, is further isomerized into keto-oxaloacetate. This is Succinate dehydrogenase [ubiquinone] iron-sulfur subunit, mitochondrial (SDHB) from Sus scrofa (Pig).